The following is a 167-amino-acid chain: MSKNSGKDKAKSATANKTIALNKRARHEYHIEERFEAGLALQGWEVKSIRAGRGNIIDAYAYVKHGEIFLIGAQITPLIQASTHVVANDRRERKLLLHRSEIDKLVGKVERDGYTIVPTAMYWSKNKIKLEVALAKGKQTHDKRDAAKDRDWAIEKQRVMRRGNRDA.

It belongs to the SmpB family.

It is found in the cytoplasm. Its function is as follows. Required for rescue of stalled ribosomes mediated by trans-translation. Binds to transfer-messenger RNA (tmRNA), required for stable association of tmRNA with ribosomes. tmRNA and SmpB together mimic tRNA shape, replacing the anticodon stem-loop with SmpB. tmRNA is encoded by the ssrA gene; the 2 termini fold to resemble tRNA(Ala) and it encodes a 'tag peptide', a short internal open reading frame. During trans-translation Ala-aminoacylated tmRNA acts like a tRNA, entering the A-site of stalled ribosomes, displacing the stalled mRNA. The ribosome then switches to translate the ORF on the tmRNA; the nascent peptide is terminated with the 'tag peptide' encoded by the tmRNA and targeted for degradation. The ribosome is freed to recommence translation, which seems to be the essential function of trans-translation. This chain is SsrA-binding protein, found in Stenotrophomonas maltophilia (strain K279a).